The sequence spans 256 residues: 5-oxoprolinase subunit A (256 aa).

This sequence belongs to the LamB/PxpA family. In terms of assembly, forms a complex composed of PxpA, PxpB and PxpC.

It carries out the reaction 5-oxo-L-proline + ATP + 2 H2O = L-glutamate + ADP + phosphate + H(+). Its function is as follows. Catalyzes the cleavage of 5-oxoproline to form L-glutamate coupled to the hydrolysis of ATP to ADP and inorganic phosphate. This is 5-oxoprolinase subunit A from Geobacillus thermodenitrificans (strain NG80-2).